The primary structure comprises 1520 residues: Myosin-5 (1520 aa).

Residues 7 to 56 (IVGSHVWVEDPHLAWIDGEVTRIDGINVHVKTKKGKTVVTNVYFPKDTEA) form the Myosin N-terminal SH3-like domain. Residues 59–729 (GGVDDMTKLS…QMAELDARRA (671 aa)) form the Myosin motor domain. ATP is bound by residues 153 to 160 (GESGAGKT) and 206 to 214 (NNNSSRFGK). Actin-binding stretches follow at residues 492-526 (LIEK…FQTF), 528-551 (EHER…AGEV), 586-610 (FHAL…KQQL), and 610-632 (LHSL…KPNN). IQ domains follow at residues 732 to 761 (LGNA…AAIV), 755 to 784 (IRNA…EAAA), 780 to 809 (IEAA…STIV), 803 to 832 (TRSS…RKAA), 828 to 857 (QRKA…AAIV), and 851 to 880 (LQKA…AARD). A coiled-coil region spans residues 881–1047 (TGALKDAKNK…ESENKVLRQQ (167 aa)). Residues 1062–1100 (PKTTIIQRTPEKDTFSNGETTQLQEPETEDRPQKSLNQK) form a disordered region. Residues 1076 to 1086 (FSNGETTQLQE) are compositionally biased toward polar residues. In terms of domain architecture, Dilute spans 1148-1463 (NRIIETIASA…IATMRAEVSD (316 aa)).

It belongs to the TRAFAC class myosin-kinesin ATPase superfamily. Myosin family. Plant myosin class XI subfamily. Homodimer. Interacts with MYOB1 and MYOB2. Interacts with PHOX1.

It localises to the cytoplasm. Its function is as follows. Myosin heavy chain that is required for the cell cycle-regulated transport of various organelles and proteins for their segregation. Functions by binding with its tail domain to receptor proteins on organelles and exerting force with its N-terminal motor domain against actin filaments, thereby transporting its cargo along polarized actin cables. Contributes to the trafficking of Golgi stacks, mitochondria and peroxisomes. Required for development of pavement cells, trichomes, and stigmatic papillae. The protein is Myosin-5 (XI-1) of Arabidopsis thaliana (Mouse-ear cress).